The chain runs to 250 residues: uncharacterized protein (250 aa).

The protein to Synechocystis PCC 6803 sll0249.

This is an uncharacterized protein from Nostoc sp. (strain PCC 7120 / SAG 25.82 / UTEX 2576).